The primary structure comprises 291 residues: 33 kDa chaperonin (291 aa).

2 disulfides stabilise this stretch: Cys237–Cys239 and Cys270–Cys273.

This sequence belongs to the HSP33 family. Under oxidizing conditions two disulfide bonds are formed involving the reactive cysteines. Under reducing conditions zinc is bound to the reactive cysteines and the protein is inactive.

The protein resides in the cytoplasm. Redox regulated molecular chaperone. Protects both thermally unfolding and oxidatively damaged proteins from irreversible aggregation. Plays an important role in the bacterial defense system toward oxidative stress. This is 33 kDa chaperonin from Halalkalibacterium halodurans (strain ATCC BAA-125 / DSM 18197 / FERM 7344 / JCM 9153 / C-125) (Bacillus halodurans).